A 429-amino-acid polypeptide reads, in one-letter code: Ribosomal RNA small subunit methyltransferase B (429 aa).

Residues 254–260, Asp-277, Asp-303, and Asp-322 each bind S-adenosyl-L-methionine; that span reads CAGPGGK. The Nucleophile role is filled by Cys-375.

Belongs to the class I-like SAM-binding methyltransferase superfamily. RsmB/NOP family.

The protein resides in the cytoplasm. It catalyses the reaction cytidine(967) in 16S rRNA + S-adenosyl-L-methionine = 5-methylcytidine(967) in 16S rRNA + S-adenosyl-L-homocysteine + H(+). In terms of biological role, specifically methylates the cytosine at position 967 (m5C967) of 16S rRNA. This is Ribosomal RNA small subunit methyltransferase B from Escherichia coli O6:K15:H31 (strain 536 / UPEC).